The following is a 149-amino-acid chain: uncharacterized protein (149 aa).

Positions 34-94 (HTPCLPKVPR…NPIGSQRIHS (61 aa)) are disordered. Over residues 56 to 66 (QSPHRQGDRRR) the composition is skewed to basic and acidic residues.

It localises to the mitochondrion. This is an uncharacterized protein from Arabidopsis thaliana (Mouse-ear cress).